The primary structure comprises 192 residues: MIAIIDYGLGNISNVTRAIQHLGYDVILTCDDKDVQKAEAIVLPGVGHFQDAMHSIEEKSIKDMLKNIHDKPIIGICLGMQLLFQHSAEGDVSGLELVPGNIVPIQSSHPIPHLGWNELKSTHPLLQSDVYFVHSYQAEMSEYVVAYADYGTKIPGVIQYRNYIGIQFHPEKSGTYGLEILNQALKGGFIND.

The region spanning 1–192 (MIAIIDYGLG…QALKGGFIND (192 aa)) is the Glutamine amidotransferase type-1 domain. Catalysis depends on C77, which acts as the Nucleophile. Catalysis depends on residues H169 and E171.

Heterodimer of HisH and HisF.

It is found in the cytoplasm. The enzyme catalyses 5-[(5-phospho-1-deoxy-D-ribulos-1-ylimino)methylamino]-1-(5-phospho-beta-D-ribosyl)imidazole-4-carboxamide + L-glutamine = D-erythro-1-(imidazol-4-yl)glycerol 3-phosphate + 5-amino-1-(5-phospho-beta-D-ribosyl)imidazole-4-carboxamide + L-glutamate + H(+). The catalysed reaction is L-glutamine + H2O = L-glutamate + NH4(+). It participates in amino-acid biosynthesis; L-histidine biosynthesis; L-histidine from 5-phospho-alpha-D-ribose 1-diphosphate: step 5/9. Its function is as follows. IGPS catalyzes the conversion of PRFAR and glutamine to IGP, AICAR and glutamate. The HisH subunit catalyzes the hydrolysis of glutamine to glutamate and ammonia as part of the synthesis of IGP and AICAR. The resulting ammonia molecule is channeled to the active site of HisF. This Staphylococcus epidermidis (strain ATCC 35984 / DSM 28319 / BCRC 17069 / CCUG 31568 / BM 3577 / RP62A) protein is Imidazole glycerol phosphate synthase subunit HisH.